We begin with the raw amino-acid sequence, 304 residues long: Aspartate carbamoyltransferase catalytic subunit (304 aa).

Carbamoyl phosphate-binding residues include Arg57 and Thr58. L-aspartate is bound at residue Lys86. Residues Arg107, His135, and Gln138 each contribute to the carbamoyl phosphate site. 2 residues coordinate L-aspartate: Arg168 and Arg229. Leu266 and Pro267 together coordinate carbamoyl phosphate.

Belongs to the aspartate/ornithine carbamoyltransferase superfamily. ATCase family. In terms of assembly, heterooligomer of catalytic and regulatory chains.

The enzyme catalyses carbamoyl phosphate + L-aspartate = N-carbamoyl-L-aspartate + phosphate + H(+). The protein operates within pyrimidine metabolism; UMP biosynthesis via de novo pathway; (S)-dihydroorotate from bicarbonate: step 2/3. Its function is as follows. Catalyzes the condensation of carbamoyl phosphate and aspartate to form carbamoyl aspartate and inorganic phosphate, the committed step in the de novo pyrimidine nucleotide biosynthesis pathway. The chain is Aspartate carbamoyltransferase catalytic subunit from Methanosphaera stadtmanae (strain ATCC 43021 / DSM 3091 / JCM 11832 / MCB-3).